The chain runs to 292 residues: MKKLTALTSAVLLGLAVSSSASAQDTIALAVSTLDNPFFVTLKDGAQKKADELGYKLVVLDSQNDPAKELANIEDLTVRGAKILLINPTASEAVGNAVAIANRKHIPVITLDRGAAKGNVVSHIASDNIAGGKMAGDFIAQKLGDNAKVIQLEGIAGTSAARERGEGFKQAIDAHKFNVLASQPADFDRTKGLNVTENLLASKGDVQAIFAQNDEMALGALRAVKAANKKVLIVGFDGTDDGVKAVKSGKMAATIAQQPELIGSLGVVTADKILKGEKVEAKIPVDLKVISE.

Positions 1 to 23 are cleaved as a signal peptide; it reads MKKLTALTSAVLLGLAVSSSASA.

It belongs to the bacterial solute-binding protein 2 family. In terms of assembly, the complex is composed of an ATP-binding protein (RbsA), two transmembrane proteins (RbsC) and a solute-binding protein (RbsB).

The protein resides in the periplasm. In terms of biological role, part of the ABC transporter complex RbsABC involved in ribose import. Binds ribose. The chain is Ribose import binding protein RbsB (rbsB) from Haemophilus influenzae (strain ATCC 51907 / DSM 11121 / KW20 / Rd).